Here is a 261-residue protein sequence, read N- to C-terminus: MWDLVLSIALSVGCTGAVPLIQSRIVGGWECEKHSQPWQVAVYSHGWAHCGGVLVHPQWVLTAAHCLKKNSQVWLGRHNLFEPEDTGQRVPVSHSFPHPLYNMSLLKHQSLRPDEDSSHDLMLLRLSEPAKITDVVKVLGLPTQEPALGTTCYASGWGSIEPEEFLRPRSLQCVSLHLLSNDMCARAYSEKVTEFMLCAGLWTGGKDTCGGDSGGPLVCNGVLQGITSWGPEPCALPEKPAVYTKVVHYRKWIKDTIAANP.

A signal peptide spans 1–18 (MWDLVLSIALSVGCTGAV). A propeptide spans 19–24 (PLIQSR) (activation peptide). One can recognise a Peptidase S1 domain in the interval 25-258 (IVGGWECEKH…YRKWIKDTIA (234 aa)). 5 disulfides stabilise this stretch: C31–C173, C50–C66, C152–C219, C184–C198, and C209–C234. Catalysis depends on H65, which acts as the Charge relay system. N102 is a glycosylation site (N-linked (GlcNAc...) asparagine). The active-site Charge relay system is the D120. S213 serves as the catalytic Charge relay system.

The protein belongs to the peptidase S1 family. Kallikrein subfamily.

It carries out the reaction Preferential cleavage of Arg-|-Xaa bonds in small molecule substrates. Highly selective action to release kallidin (lysyl-bradykinin) from kininogen involves hydrolysis of Met-|-Xaa or Leu-|-Xaa.. In terms of biological role, glandular kallikreins cleave Met-Lys and Arg-Ser bonds in kininogen to release Lys-bradykinin. This is Kallikrein-2 (KLK2) from Homo sapiens (Human).